A 442-amino-acid polypeptide reads, in one-letter code: MSEIGSYHDTIFALSSGRLPSGVAVIRISGPKTRFVYETICQAIPEPRHAALLTFRSRNGDAIDRGLTLFFPAPHTFTGEDCAEFHLHGGKAVVEKMLAVLGELPGCRIAEAGEFTRRAFANGKMDLTIAEGLADLIAAETEGQRRLAMQVASGNQRKLYSEWRQRLINARAFIEAELDFADESDVPGSVSMQVWQQLSALKHEIEYHIASGKRAAMLRDGLHVVIVGAPNAGKSSLLNFLAGRDVAIISEEAGTTRDLLEVKLDLGGIPVYVTDTAGLRETDSLVEKIGIERARARMAEADLVLSLEDMSGPVSVTVEKIEAETWLIGTKADLGGSASGLWKYHISTMTGSGLEQLLDALQAFAEAKIGQIEDAVPTRQRHINLLRATIEEIEKAIEGDDLPLELRAENMRLASQFLGRITGDVDVEEILDVIFSQFCIGK.

Positions 27, 84, and 124 each coordinate (6S)-5-formyl-5,6,7,8-tetrahydrofolate. Residues 221 to 366 (GLHVVIVGAP…LLDALQAFAE (146 aa)) form the TrmE-type G domain. Residues 231 to 236 (NAGKSS), 250 to 256 (SEEAGTT), and 275 to 278 (DTAG) contribute to the GTP site. Serine 235 and threonine 256 together coordinate Mg(2+). Lysine 442 is a (6S)-5-formyl-5,6,7,8-tetrahydrofolate binding site.

Belongs to the TRAFAC class TrmE-Era-EngA-EngB-Septin-like GTPase superfamily. TrmE GTPase family. In terms of assembly, homodimer. Heterotetramer of two MnmE and two MnmG subunits. It depends on K(+) as a cofactor.

Its subcellular location is the cytoplasm. In terms of biological role, exhibits a very high intrinsic GTPase hydrolysis rate. Involved in the addition of a carboxymethylaminomethyl (cmnm) group at the wobble position (U34) of certain tRNAs, forming tRNA-cmnm(5)s(2)U34. The polypeptide is tRNA modification GTPase MnmE (Brucella suis (strain ATCC 23445 / NCTC 10510)).